The chain runs to 580 residues: Nucleolar protein 58 (580 aa).

The region spanning 285–410 is the Nop domain; that stretch reads IAPNLTALVG…LERKLAAMEG (126 aa). The interval 444–580 is disordered; that stretch reads DAVTGDEPAS…KKKKKKKGEE (137 aa). Residues 465–487 are compositionally biased toward acidic residues; the sequence is EVQDEEMADAADSDEESDSSDEE. Composition is skewed to basic and acidic residues over residues 495-505 and 547-562; these read SKDSELEKLAE and KKSA…RTDD. Residues 570 to 580 are compositionally biased toward basic residues; sequence KKKKKKKKGEE.

It belongs to the NOP5/NOP56 family.

The protein localises to the nucleus. The protein resides in the nucleolus. Its function is as follows. Required for pre-18S rRNA processing. May bind microtubules. This Aspergillus niger (strain ATCC MYA-4892 / CBS 513.88 / FGSC A1513) protein is Nucleolar protein 58 (nop58).